Here is a 91-residue protein sequence, read N- to C-terminus: DNA-directed RNA polymerase subunit omega (91 aa).

The protein belongs to the RNA polymerase subunit omega family. As to quaternary structure, the RNAP catalytic core consists of 2 alpha, 1 beta, 1 beta' and 1 omega subunit. When a sigma factor is associated with the core the holoenzyme is formed, which can initiate transcription.

The enzyme catalyses RNA(n) + a ribonucleoside 5'-triphosphate = RNA(n+1) + diphosphate. In terms of biological role, promotes RNA polymerase assembly. Latches the N- and C-terminal regions of the beta' subunit thereby facilitating its interaction with the beta and alpha subunits. This chain is DNA-directed RNA polymerase subunit omega, found in Pseudoalteromonas translucida (strain TAC 125).